A 188-amino-acid polypeptide reads, in one-letter code: Elongation factor P (188 aa).

This sequence belongs to the elongation factor P family.

The protein resides in the cytoplasm. It functions in the pathway protein biosynthesis; polypeptide chain elongation. In terms of biological role, involved in peptide bond synthesis. Stimulates efficient translation and peptide-bond synthesis on native or reconstituted 70S ribosomes in vitro. Probably functions indirectly by altering the affinity of the ribosome for aminoacyl-tRNA, thus increasing their reactivity as acceptors for peptidyl transferase. The chain is Elongation factor P from Phocaeicola vulgatus (strain ATCC 8482 / DSM 1447 / JCM 5826 / CCUG 4940 / NBRC 14291 / NCTC 11154) (Bacteroides vulgatus).